A 405-amino-acid polypeptide reads, in one-letter code: S-adenosylmethionine synthase (405 aa).

His-19 contributes to the ATP binding site. Asp-21 contacts Mg(2+). Glu-47 provides a ligand contact to K(+). L-methionine-binding residues include Glu-60 and Gln-103. Positions 103-113 (QSADIAQGVDK) are flexible loop. ATP contacts are provided by residues 179-181 (DGK), 246-247 (RF), Asp-255, 261-262 (RK), Ala-278, and Lys-282. Asp-255 provides a ligand contact to L-methionine. Lys-286 contacts L-methionine.

It belongs to the AdoMet synthase family. In terms of assembly, homotetramer; dimer of dimers. Requires Mg(2+) as cofactor. It depends on K(+) as a cofactor.

Its subcellular location is the cytoplasm. The catalysed reaction is L-methionine + ATP + H2O = S-adenosyl-L-methionine + phosphate + diphosphate. The protein operates within amino-acid biosynthesis; S-adenosyl-L-methionine biosynthesis; S-adenosyl-L-methionine from L-methionine: step 1/1. In terms of biological role, catalyzes the formation of S-adenosylmethionine (AdoMet) from methionine and ATP. The overall synthetic reaction is composed of two sequential steps, AdoMet formation and the subsequent tripolyphosphate hydrolysis which occurs prior to release of AdoMet from the enzyme. This chain is S-adenosylmethionine synthase, found in Shouchella clausii (strain KSM-K16) (Alkalihalobacillus clausii).